Here is a 397-residue protein sequence, read N- to C-terminus: Dual specificity mitogen-activated protein kinase kinase 2 (397 aa).

Residues 1–21 form a disordered region; it reads MAPKRRPVPLIIAPTGEGQST. Residues 69-366 enclose the Protein kinase domain; sequence FDPICELGAG…LKMLMGHTFI (298 aa). Residues 75 to 83 and lysine 98 each bind ATP; that span reads LGAGNGGVV. Aspartate 191 (proton acceptor) is an active-site residue. Phosphoserine; by RAF is present on residues serine 219 and serine 223. The tract at residues 284-306 is disordered; it reads GGAEGHSMSPRQRPPGRPVSGHG.

Belongs to the protein kinase superfamily. STE Ser/Thr protein kinase family. MAP kinase kinase subfamily. In terms of processing, phosphorylation on Ser/Thr by MAP kinase kinase kinases (RAF) positively regulates the kinase activity.

It carries out the reaction L-seryl-[protein] + ATP = O-phospho-L-seryl-[protein] + ADP + H(+). The catalysed reaction is L-threonyl-[protein] + ATP = O-phospho-L-threonyl-[protein] + ADP + H(+). It catalyses the reaction L-tyrosyl-[protein] + ATP = O-phospho-L-tyrosyl-[protein] + ADP + H(+). Catalyzes the concomitant phosphorylation of a threonine and a tyrosine residue in a Thr-Glu-Tyr sequence located in MAP kinases. The polypeptide is Dual specificity mitogen-activated protein kinase kinase 2 (map2k2) (Cyprinus carpio (Common carp)).